Reading from the N-terminus, the 377-residue chain is ATP phosphoribosyltransferase regulatory subunit (377 aa).

It belongs to the class-II aminoacyl-tRNA synthetase family. HisZ subfamily. In terms of assembly, heteromultimer composed of HisG and HisZ subunits.

The protein resides in the cytoplasm. The protein operates within amino-acid biosynthesis; L-histidine biosynthesis; L-histidine from 5-phospho-alpha-D-ribose 1-diphosphate: step 1/9. Its function is as follows. Required for the first step of histidine biosynthesis. May allow the feedback regulation of ATP phosphoribosyltransferase activity by histidine. The sequence is that of ATP phosphoribosyltransferase regulatory subunit from Sinorhizobium medicae (strain WSM419) (Ensifer medicae).